The chain runs to 365 residues: Probable dual-specificity RNA methyltransferase RlmN (365 aa).

Glutamate 108 serves as the catalytic Proton acceptor. The region spanning 114-347 (HNYGNSVCVT…VTIRREHGHD (234 aa)) is the Radical SAM core domain. Cysteine 121 and cysteine 352 form a disulfide bridge. 3 residues coordinate [4Fe-4S] cluster: cysteine 128, cysteine 132, and cysteine 135. S-adenosyl-L-methionine-binding positions include 178–179 (GE), serine 210, 233–235 (SLH), and asparagine 309. Catalysis depends on cysteine 352, which acts as the S-methylcysteine intermediate.

This sequence belongs to the radical SAM superfamily. RlmN family. [4Fe-4S] cluster is required as a cofactor.

It localises to the cytoplasm. The enzyme catalyses adenosine(2503) in 23S rRNA + 2 reduced [2Fe-2S]-[ferredoxin] + 2 S-adenosyl-L-methionine = 2-methyladenosine(2503) in 23S rRNA + 5'-deoxyadenosine + L-methionine + 2 oxidized [2Fe-2S]-[ferredoxin] + S-adenosyl-L-homocysteine. The catalysed reaction is adenosine(37) in tRNA + 2 reduced [2Fe-2S]-[ferredoxin] + 2 S-adenosyl-L-methionine = 2-methyladenosine(37) in tRNA + 5'-deoxyadenosine + L-methionine + 2 oxidized [2Fe-2S]-[ferredoxin] + S-adenosyl-L-homocysteine. Specifically methylates position 2 of adenine 2503 in 23S rRNA and position 2 of adenine 37 in tRNAs. The protein is Probable dual-specificity RNA methyltransferase RlmN of Geobacillus kaustophilus (strain HTA426).